Here is a 569-residue protein sequence, read N- to C-terminus: Santalene synthase (569 aa).

R284, D321, D325, and R460 together coordinate (2E)-geranyl diphosphate. Residues D321 and D325 each contribute to the Mg(2+) site. Positions 321 to 325 (DDAYD) match the DDXXD motif motif. 3 residues coordinate Mg(2+): N463, T467, and E471.

The protein belongs to the terpene synthase family. Tpsb subfamily. It depends on Mg(2+) as a cofactor. Mn(2+) is required as a cofactor.

The enzyme catalyses (2E,6E)-farnesyl diphosphate = (1S,5S,6R)-alpha-bergamotene + diphosphate. The catalysed reaction is (2E,6E)-farnesyl diphosphate = (+)-alpha-santalene + diphosphate. It carries out the reaction (2E,6E)-farnesyl diphosphate = (-)-beta-santalene + diphosphate. Catalyzes a mixture of sesquiterpenoids from (2E,6E)-farnesyl diphosphate in fragrance biosynthesis. Catalyzes the formation of alpha-santalene, beta-santalene, epi-beta-santalene and exo-alpha-bergamotene, as well as traces of alpha-farnesene and beta-farnesene. The protein is Santalene synthase of Santalum austrocaledonicum (Sandalwood).